The following is a 452-amino-acid chain: Pup--protein ligase (452 aa).

Residue glutamate 9 coordinates Mg(2+). Position 53 (arginine 53) interacts with ATP. Position 55 (tyrosine 55) interacts with Mg(2+). The active-site Proton acceptor is aspartate 57. A Mg(2+)-binding site is contributed by glutamate 63. ATP contacts are provided by threonine 66 and tryptophan 419.

This sequence belongs to the Pup ligase/Pup deamidase family. Pup-conjugating enzyme subfamily.

The catalysed reaction is ATP + [prokaryotic ubiquitin-like protein]-L-glutamate + [protein]-L-lysine = ADP + phosphate + N(6)-([prokaryotic ubiquitin-like protein]-gamma-L-glutamyl)-[protein]-L-lysine.. The protein operates within protein degradation; proteasomal Pup-dependent pathway. It functions in the pathway protein modification; protein pupylation. Functionally, catalyzes the covalent attachment of the prokaryotic ubiquitin-like protein modifier Pup to the proteasomal substrate proteins, thereby targeting them for proteasomal degradation. This tagging system is termed pupylation. The ligation reaction involves the side-chain carboxylate of the C-terminal glutamate of Pup and the side-chain amino group of a substrate lysine. This Salinispora tropica (strain ATCC BAA-916 / DSM 44818 / JCM 13857 / NBRC 105044 / CNB-440) protein is Pup--protein ligase.